We begin with the raw amino-acid sequence, 126 residues long: Ribosome-binding factor A (126 aa).

Belongs to the RbfA family. In terms of assembly, monomer. Binds 30S ribosomal subunits, but not 50S ribosomal subunits or 70S ribosomes.

The protein localises to the cytoplasm. In terms of biological role, one of several proteins that assist in the late maturation steps of the functional core of the 30S ribosomal subunit. Associates with free 30S ribosomal subunits (but not with 30S subunits that are part of 70S ribosomes or polysomes). Required for efficient processing of 16S rRNA. May interact with the 5'-terminal helix region of 16S rRNA. The protein is Ribosome-binding factor A of Thermosipho africanus (strain TCF52B).